Reading from the N-terminus, the 701-residue chain is Elongation factor G (701 aa).

In terms of domain architecture, tr-type G spans 8–291 (SRYRNIGIVA…AVIDYLPAPV (284 aa)). GTP is bound by residues 17–24 (AHVDAGKT), 89–93 (DTPGH), and 143–146 (NKMD).

This sequence belongs to the TRAFAC class translation factor GTPase superfamily. Classic translation factor GTPase family. EF-G/EF-2 subfamily.

The protein resides in the cytoplasm. Its function is as follows. Catalyzes the GTP-dependent ribosomal translocation step during translation elongation. During this step, the ribosome changes from the pre-translocational (PRE) to the post-translocational (POST) state as the newly formed A-site-bound peptidyl-tRNA and P-site-bound deacylated tRNA move to the P and E sites, respectively. Catalyzes the coordinated movement of the two tRNA molecules, the mRNA and conformational changes in the ribosome. The polypeptide is Elongation factor G (Pseudomonas fluorescens (strain SBW25)).